A 1007-amino-acid chain; its full sequence is Lysosomal alpha-mannosidase (1007 aa).

Low complexity-rich tracts occupy residues 1 to 10 (MGADARPLGV) and 19 to 28 (AARPGTSSRA). The tract at residues 1 to 30 (MGADARPLGVRAGGGGRGAARPGTSSRALP) is disordered. Residues 1–50 (MGADARPLGVRAGGGGRGAARPGTSSRALPPPLPPLSFLLLLLAAPGARA) form the signal peptide. 2 disulfides stabilise this stretch: Cys-56/Cys-360 and Cys-269/Cys-274. Positions 73 and 75 each coordinate Zn(2+). Asn-134 carries an N-linked (GlcNAc...) asparagine glycan. Asp-197 provides a ligand contact to Zn(2+). Asp-197 serves as the catalytic Nucleophile. 3 N-linked (GlcNAc...) asparagine glycosylation sites follow: Asn-311, Asn-347, and Asn-369. 2 disulfide bridges follow: Cys-414-Cys-474 and Cys-495-Cys-503. Position 448 (His-448) interacts with Zn(2+). N-linked (GlcNAc...) asparagine glycans are attached at residues Asn-499, Asn-543, Asn-643, Asn-649, Asn-690, Asn-764, and Asn-927.

It belongs to the glycosyl hydrolase 38 family. The cofactor is Zn(2+). Processed into 3 peptides of 72 kDa, 41 kDa and 12 kDa.

The protein resides in the lysosome. The catalysed reaction is Hydrolysis of terminal, non-reducing alpha-D-mannose residues in alpha-D-mannosides.. In terms of biological role, necessary for the catabolism of N-linked carbohydrates released during glycoprotein turnover. This chain is Lysosomal alpha-mannosidase (MAN2B1), found in Felis catus (Cat).